The following is a 1728-amino-acid chain: Protein NETWORKED 1A (1728 aa).

The 80-residue stretch at 13–92 (YSWWWDSHIP…ERYDHATVEL (80 aa)) folds into the NAB domain. 7 coiled-coil regions span residues 155–446 (LGNS…LEIE), 476–827 (MLRD…QVEI), 857–885 (FSEKLIAELESENLEQQMEAEFLVHEIDN), 954–1016 (QFQS…AELQ), 1090–1323 (EQAE…KETV), 1403–1431 (LLQDMKTRIKTIKQAVAEEKKRRGKLRRR), and 1576–1684 (RRLA…TKSK). The interval 1419 to 1441 (AEEKKRRGKLRRRSSSHRSKDRK) is disordered. The span at 1424–1439 (RRGKLRRRSSSHRSKD) shows a compositional bias: basic residues.

It belongs to the NET family. As to quaternary structure, interacts with F-actin. As to expression, expressed in root meristems and at very low levels throughout mature vasculature.

The protein resides in the cytoplasm. It is found in the cytoskeleton. Its subcellular location is the cell membrane. It localises to the cell junction. The protein localises to the plasmodesma. Functionally, plant-specific actin binding protein. Associates with F-actin at the plasma membrane and plasmodesmata. May be part of a membrane-cytoskeletal adapter complex. This chain is Protein NETWORKED 1A, found in Arabidopsis thaliana (Mouse-ear cress).